We begin with the raw amino-acid sequence, 1176 residues long: Serine/threonine-protein kinase pakF (1176 aa).

Low complexity-rich tracts occupy residues 1–19 (MSNL…ESSS) and 32–52 (NLLN…SGSN). Disordered regions lie at residues 1-231 (MSNL…HESR) and 254-361 (LPST…KKTK). The span at 64-76 (QLPPNYTPPPPPH) shows a compositional bias: pro residues. Residues 92-133 (LNNENSDNNNNNNNNNNNNNNNNNNNNNNNNNNNEQLARTES) adopt a coiled-coil conformation. Low complexity-rich tracts occupy residues 93-125 (NNEN…NNNN), 133-148 (SSVS…SNSG), and 156-172 (SSNI…ETYS). Residues 173 to 197 (MSPNQTLNSNIDSSEQQHQDLSSSV) show a composition bias toward polar residues. Over residues 198-226 (NNNNNNNNNNNNNNNNNNNNNNNNNNNNN) the composition is skewed to low complexity. Residues 254–289 (LPSTPTQQNVEIQTTNGGSSETSPNGLISPRPSNDQ) show a composition bias toward polar residues. Positions 316–353 (SLSSSTTTPSTTSSLTSSPSSSSLAISSPNTTAATTTN) are enriched in low complexity. One can recognise a CRIB domain in the interval 370–383 (ISVPYNVIHKMHVD). The Protein kinase domain maps to 394 to 646 (FILDEKLGDG…PIDLLCHPFL (253 aa)). ATP is bound by residues 400–408 (LGDGAYGSV) and K423. The Proton acceptor role is filled by D514. Disordered stretches follow at residues 670–723 (IDDL…SDEL), 753–885 (QEEE…GNNL), 968–1083 (HTTS…TGRA), and 1112–1176 (NSNS…NIKK). 2 stretches are compositionally biased toward low complexity: residues 682-693 (SQSSSSSSPQSP) and 710-720 (SIISPIPSSPS). 2 stretches are compositionally biased toward acidic residues: residues 767–789 (DEQD…EDVD) and 813–844 (DQDD…DEEI). Residues 812–873 (SDQDDEEEDE…NKKKNKKNNL (62 aa)) adopt a coiled-coil conformation. Basic residues predominate over residues 852-870 (VRKKKNKSTKKSNKKKNKK). Polar residues-rich tracts occupy residues 873–884 (LSTIGKSGSGNN) and 968–985 (HTTS…ATNL). Low complexity-rich tracts occupy residues 991 to 1044 (SSSP…RPNS), 1051 to 1066 (NNSS…SSSS), and 1148 to 1176 (SSGS…NIKK).

Belongs to the protein kinase superfamily. STE Ser/Thr protein kinase family. STE20 subfamily. Requires Mg(2+) as cofactor.

The catalysed reaction is L-seryl-[protein] + ATP = O-phospho-L-seryl-[protein] + ADP + H(+). It catalyses the reaction L-threonyl-[protein] + ATP = O-phospho-L-threonyl-[protein] + ADP + H(+). The polypeptide is Serine/threonine-protein kinase pakF (Dictyostelium discoideum (Social amoeba)).